A 1370-amino-acid polypeptide reads, in one-letter code: DNA-directed RNA polymerase subunit beta (1370 aa).

The protein belongs to the RNA polymerase beta chain family. The RNAP catalytic core consists of 2 alpha, 1 beta, 1 beta' and 1 omega subunit. When a sigma factor is associated with the core the holoenzyme is formed, which can initiate transcription.

It catalyses the reaction RNA(n) + a ribonucleoside 5'-triphosphate = RNA(n+1) + diphosphate. Functionally, DNA-dependent RNA polymerase catalyzes the transcription of DNA into RNA using the four ribonucleoside triphosphates as substrates. The sequence is that of DNA-directed RNA polymerase subunit beta from Delftia acidovorans (strain DSM 14801 / SPH-1).